A 389-amino-acid chain; its full sequence is Indole-3-acetate monooxygenase (389 aa).

This sequence belongs to the HpaH/HsaA monooxygenase family.

The catalysed reaction is (indol-3-yl)acetate + NADH + O2 + H(+) = 2-hydroxy-(1H-indol-3-yl)acetate + NAD(+) + H2O. It carries out the reaction indole + NADH + O2 + H(+) = indoxyl + NAD(+) + H2O. Its function is as follows. Involved in the degradation of the plant hormone indole-3-acetic acid (IAA). Catalyzes the first step of the pathway, the conversion of IAA to 2-hydroxy-IAA (2-OH-IAA). Can also convert indole to indoxyl, which spontaneously dimerizes in the presence of oxygen to form the blue pigment indigo. This is Indole-3-acetate monooxygenase from Pseudomonas putida (Arthrobacter siderocapsulatus).